The sequence spans 452 residues: Phosphoglucosamine mutase (452 aa).

The active-site Phosphoserine intermediate is S103. Mg(2+) contacts are provided by S103, D244, D246, and D248. S103 bears the Phosphoserine mark.

This sequence belongs to the phosphohexose mutase family. Requires Mg(2+) as cofactor. In terms of processing, activated by phosphorylation.

The enzyme catalyses alpha-D-glucosamine 1-phosphate = D-glucosamine 6-phosphate. Catalyzes the conversion of glucosamine-6-phosphate to glucosamine-1-phosphate. This Rhodospirillum rubrum (strain ATCC 11170 / ATH 1.1.1 / DSM 467 / LMG 4362 / NCIMB 8255 / S1) protein is Phosphoglucosamine mutase.